The sequence spans 451 residues: MPHRAPRRFMKTAPGACDWEQCLLMGSGEPTRARAVVSSSHKQRKPRQEISACLKWLVFLLNSIVFLVGVGILALGVYLFIKDFREVKLVDIILNPAILISIFGFSICVVSFFGFMGALRDNIFLLKCFAACVFLSYILVVAVTLVFFTLFYTDTTEGLSANWLLLYAVKNYHTNRNLAEIMDALQENLECCGVSSIAQGYRDWNMSYQFNCTNSNPQPEKCGVPFSCCRKSVISEAAGSSNPLLPAMRSLECWQNALTKRPGDLEHDIYTRGCLQPLRTLFESHAVHVGAFVALLIVPVCISVCLTNILAKQVDHQRYLLEREARRNDRRRKRDHNRRDQLNSLDLLEEGKFNNASANATRPRPPDIPPPLPPIEHVPRKKSRNASSSPTRKPKSAGVENAAARRKRTATTTRTPPAAAGPAPTPQATTTNRTHQWVLQQTDLVPQKSKS.

Residues 1 to 56 (MPHRAPRRFMKTAPGACDWEQCLLMGSGEPTRARAVVSSSHKQRKPRQEISACLKW) lie on the Cytoplasmic side of the membrane. A Basolateral membrane targeting motif is present at residues 20–24 (EQCLL). The chain crosses the membrane as a helical span at residues 57–77 (LVFLLNSIVFLVGVGILALGV). The Extracellular portion of the chain corresponds to 78–96 (YLFIKDFREVKLVDIILNP). A helical membrane pass occupies residues 97 to 117 (AILISIFGFSICVVSFFGFMG). The Cytoplasmic portion of the chain corresponds to 118–130 (ALRDNIFLLKCFA). The chain crosses the membrane as a helical span at residues 131 to 151 (ACVFLSYILVVAVTLVFFTLF). Residues 152-285 (YTDTTEGLSA…QPLRTLFESH (134 aa)) lie on the Extracellular side of the membrane. N-linked (GlcNAc...) asparagine glycans are attached at residues N205 and N211. A helical transmembrane segment spans residues 286–306 (AVHVGAFVALLIVPVCISVCL). Residues 307 to 451 (TNILAKQVDH…TDLVPQKSKS (145 aa)) are Cytoplasmic-facing. Positions 328 to 451 (NDRRRKRDHN…TDLVPQKSKS (124 aa)) are disordered. Over residues 366-376 (PDIPPPLPPIE) the composition is skewed to pro residues. Residues 410-434 (ATTTRTPPAAAGPAPTPQATTTNRT) are compositionally biased toward low complexity. Positions 435–444 (HQWVLQQTDL) are enriched in polar residues.

Belongs to the tetraspanin (TM4SF) family. Expressed in the germline, particularly in sperm cells. As to expression, expressed in the germline (particularly in sperm cells), anterior sensory cilia, hypodermis and vulva (at protein level). In terms of tissue distribution, expressed in the pharynx, hypodermis and vulva (at protein level).

The protein localises to the cell membrane. Its subcellular location is the cytoplasmic vesicle membrane. It localises to the endosome membrane. The protein resides in the early endosome membrane. It is found in the late endosome membrane. The protein localises to the recycling endosome membrane. Its subcellular location is the apical cell membrane. It localises to the basolateral cell membrane. Functionally, functions redundantly with tsp-12 to regulate cell surface levels of the BMP type II receptor daf-4 (but not BMP type I receptor sma-6), probably by regulating endosomal sorting and recycling of receptors, preventing their targeting to degradative lysosomes. Together with tsp-12, regulates cell fate specification in the postembryonic mesodermal M lineage, body size, male development and vulva development, probably by positively modulating BMP-like Sma/Mab signaling. Together with tsp-12 involved in maintaining the structural and functional integrity of the endosomal network. Together with tsp-12, probably acts by modulating the activation of glp-1, Notch-like receptor, to regulate germline maturation. In terms of biological role, functions redundantly with tsp-12 to regulate cell fate specification in the postembryonic mesodermal M lineage, body size, embryonic and vulva development. Functions redundantly with tsp-12 to regulate cell fate specification in the postembryonic mesodermal M lineage. Likely plays a complementary role in mesodermal development with tsp-14 isoform a, but may be more critical. The chain is Tetraspanin-14 from Caenorhabditis elegans.